We begin with the raw amino-acid sequence, 1250 residues long: DNA-directed RNA polymerase subunit beta (1250 aa).

The segment at 1215 to 1250 (QDLNDDDINPDDTIDAELDDNLFDDDFDDTFDDDDL) is disordered.

It belongs to the RNA polymerase beta chain family. As to quaternary structure, the RNAP catalytic core consists of 2 alpha, 1 beta, 1 beta' and 1 omega subunit. When a sigma factor is associated with the core the holoenzyme is formed, which can initiate transcription.

It catalyses the reaction RNA(n) + a ribonucleoside 5'-triphosphate = RNA(n+1) + diphosphate. DNA-dependent RNA polymerase catalyzes the transcription of DNA into RNA using the four ribonucleoside triphosphates as substrates. This Acetivibrio thermocellus (strain ATCC 27405 / DSM 1237 / JCM 9322 / NBRC 103400 / NCIMB 10682 / NRRL B-4536 / VPI 7372) (Clostridium thermocellum) protein is DNA-directed RNA polymerase subunit beta.